Here is a 494-residue protein sequence, read N- to C-terminus: Bifunctional pantoate ligase/cytidylate kinase (494 aa).

Residues 1-258 are pantoate--beta-alanine ligase; sequence MHFVPTMGGL…CGSTRLIDHA (258 aa). 7-14 contacts ATP; sequence MGGLHHGH. The active-site Proton donor is the H14. (R)-pantoate is bound at residue Q41. Q41 contacts beta-alanine. 130–133 serves as a coordination point for ATP; that stretch reads GEKD. A (R)-pantoate-binding site is contributed by Q136. ATP contacts are provided by residues V159 and 167–170; that span reads SSSR. The tract at residues 259–494 is cytidylate kinase; that stretch reads FLMTRSPLVA…VGEEVWPTPV (236 aa).

It in the N-terminal section; belongs to the pantothenate synthetase family. The protein in the C-terminal section; belongs to the cytidylate kinase family. Type 1 subfamily.

Its subcellular location is the cytoplasm. The catalysed reaction is (R)-pantoate + beta-alanine + ATP = (R)-pantothenate + AMP + diphosphate + H(+). It catalyses the reaction CMP + ATP = CDP + ADP. It carries out the reaction dCMP + ATP = dCDP + ADP. The protein operates within cofactor biosynthesis; (R)-pantothenate biosynthesis; (R)-pantothenate from (R)-pantoate and beta-alanine: step 1/1. Its function is as follows. Catalyzes the condensation of pantoate with beta-alanine in an ATP-dependent reaction via a pantoyl-adenylate intermediate. In terms of biological role, catalyzes the transfer of a phosphate group from ATP to either CMP or dCMP to form CDP or dCDP and ADP, respectively. The protein is Bifunctional pantoate ligase/cytidylate kinase of Synechococcus sp. (strain CC9311).